Consider the following 479-residue polypeptide: ATP synthase subunit beta (479 aa).

Position 168–175 (G168–T175) interacts with ATP.

The protein belongs to the ATPase alpha/beta chains family. As to quaternary structure, F-type ATPases have 2 components, CF(1) - the catalytic core - and CF(0) - the membrane proton channel. CF(1) has five subunits: alpha(3), beta(3), gamma(1), delta(1), epsilon(1). CF(0) has three main subunits: a(1), b(2) and c(9-12). The alpha and beta chains form an alternating ring which encloses part of the gamma chain. CF(1) is attached to CF(0) by a central stalk formed by the gamma and epsilon chains, while a peripheral stalk is formed by the delta and b chains.

It is found in the cell membrane. The catalysed reaction is ATP + H2O + 4 H(+)(in) = ADP + phosphate + 5 H(+)(out). Produces ATP from ADP in the presence of a proton gradient across the membrane. The catalytic sites are hosted primarily by the beta subunits. The protein is ATP synthase subunit beta of Frankia casuarinae (strain DSM 45818 / CECT 9043 / HFP020203 / CcI3).